Reading from the N-terminus, the 105-residue chain is Large ribosomal subunit protein uL24 (105 aa).

The protein belongs to the universal ribosomal protein uL24 family. In terms of assembly, part of the 50S ribosomal subunit.

Functionally, one of two assembly initiator proteins, it binds directly to the 5'-end of the 23S rRNA, where it nucleates assembly of the 50S subunit. One of the proteins that surrounds the polypeptide exit tunnel on the outside of the subunit. In Xanthomonas axonopodis pv. citri (strain 306), this protein is Large ribosomal subunit protein uL24.